An 884-amino-acid chain; its full sequence is Chitin synthase E (884 aa).

2 disordered regions span residues 1–58 (MGTP…PAVS) and 73–108 (AVFAAPPYQESEAASENTFRARSNGDKASREGSRAG). Composition is skewed to polar residues over residues 37–48 (QSLLERNNSSHY) and 84–93 (EAASENTFRA). Asparagine 44 carries an N-linked (GlcNAc...) asparagine glycan. The segment covering 95–105 (SNGDKASREGS) has biased composition (basic and acidic residues). A glycan (N-linked (GlcNAc...) asparagine) is linked at asparagine 301. 7 helical membrane-spanning segments follow: residues 513 to 532 (WLNGSFAAGLYAIMHFGRIY), 556 to 576 (IMTWFSLASYWLTSSVIMDLV), 597 to 617 (IVNNFVKYGYVWVLTLQFIMA), 635 to 655 (YFSLVQLYVLILSFYLVVGAF), 681 to 701 (GGIVLIALVSTYGIYIIASVL), 708 to 728 (IITSSWAYFLGMTTSINILMV), and 812 to 832 (VLVCLWVFSNLLVTLLITATG). N-linked (GlcNAc...) asparagine glycosylation occurs at asparagine 840. The helical transmembrane segment at 852 to 872 (VILWITAGLSLFRFIGSLWFL) threads the bilayer.

The protein belongs to the chitin synthase family. Class III subfamily.

It is found in the cell membrane. The enzyme catalyses [(1-&gt;4)-N-acetyl-beta-D-glucosaminyl](n) + UDP-N-acetyl-alpha-D-glucosamine = [(1-&gt;4)-N-acetyl-beta-D-glucosaminyl](n+1) + UDP + H(+). Polymerizes chitin, a structural polymer of the cell wall and septum, by transferring the sugar moiety of UDP-GlcNAc to the non-reducing end of the growing chitin polymer. Plays an important role in septal growth or maintenance. Mediates colony spore formation. ChsE and chsD seem to play a functionally redundant role in lateral cell wall chitin synthesis. Involved in resistance to echinocandins. The protein is Chitin synthase E of Aspergillus niger (strain ATCC MYA-4892 / CBS 513.88 / FGSC A1513).